Reading from the N-terminus, the 260-residue chain is DNA repair protein RecO (260 aa).

The protein belongs to the RecO family.

Involved in DNA repair and RecF pathway recombination. This is DNA repair protein RecO from Chlorobaculum parvum (strain DSM 263 / NCIMB 8327) (Chlorobium vibrioforme subsp. thiosulfatophilum).